A 235-amino-acid chain; its full sequence is Octanoyltransferase (235 aa).

Residues 37–220 form the BPL/LPL catalytic domain; the sequence is AGGPDTLLLL…AVNDALDGWL (184 aa). Substrate is bound by residues 78 to 85, 150 to 152, and 163 to 165; these read RGGKITWH, AIG, and GFA. Residue Cys181 is the Acyl-thioester intermediate of the active site.

Belongs to the LipB family.

It localises to the cytoplasm. The catalysed reaction is octanoyl-[ACP] + L-lysyl-[protein] = N(6)-octanoyl-L-lysyl-[protein] + holo-[ACP] + H(+). It functions in the pathway protein modification; protein lipoylation via endogenous pathway; protein N(6)-(lipoyl)lysine from octanoyl-[acyl-carrier-protein]: step 1/2. In terms of biological role, catalyzes the transfer of endogenously produced octanoic acid from octanoyl-acyl-carrier-protein onto the lipoyl domains of lipoate-dependent enzymes. Lipoyl-ACP can also act as a substrate although octanoyl-ACP is likely to be the physiological substrate. In Mycobacterium leprae (strain Br4923), this protein is Octanoyltransferase.